The following is a 305-amino-acid chain: N-acetylneuraminate lyase 2 (305 aa).

Aceneuramate contacts are provided by Ser47 and Thr48. Residue Tyr137 is the Proton donor of the active site. Residue Lys165 is the Schiff-base intermediate with substrate of the active site. Residues Thr167, Gly189, Asp191, Glu192, and Ser208 each coordinate aceneuramate.

The protein belongs to the DapA family. NanA subfamily. In terms of assembly, homotetramer.

It localises to the cytoplasm. The catalysed reaction is aceneuramate = aldehydo-N-acetyl-D-mannosamine + pyruvate. It participates in amino-sugar metabolism; N-acetylneuraminate degradation; D-fructose 6-phosphate from N-acetylneuraminate: step 1/5. Catalyzes the reversible aldol cleavage of N-acetylneuraminic acid (sialic acid; Neu5Ac) to form pyruvate and N-acetylmannosamine (ManNAc) via a Schiff base intermediate. In Escherichia coli O6:H1 (strain CFT073 / ATCC 700928 / UPEC), this protein is N-acetylneuraminate lyase 2.